Reading from the N-terminus, the 185-residue chain is Ribosome-recycling factor (185 aa).

Belongs to the RRF family.

It localises to the cytoplasm. In terms of biological role, responsible for the release of ribosomes from messenger RNA at the termination of protein biosynthesis. May increase the efficiency of translation by recycling ribosomes from one round of translation to another. This is Ribosome-recycling factor from Listeria welshimeri serovar 6b (strain ATCC 35897 / DSM 20650 / CCUG 15529 / CIP 8149 / NCTC 11857 / SLCC 5334 / V8).